A 286-amino-acid polypeptide reads, in one-letter code: Acyl-CoA-binding domain-containing protein 6 (286 aa).

A disordered region spans residues 1-24 (MASPGVLEESSSGEACSGGCPEQW). A compositionally biased stretch (low complexity) spans 8 to 22 (EESSSGEACSGGCPE). One can recognise an ACB domain in the interval 32-117 (LQGQFEQAAK…VKKLDPDWSP (86 aa)). An acyl-CoA contacts are provided by residues 59–63 (YARYK), Lys-85, and Tyr-104. ANK repeat units follow at residues 182–211 (EGRCLLHWACDRGHTQLVSVLLFHNAHINM) and 215–244 (EGQTPLHYASACEFPDIVDLLLDHGADPSL).

It localises to the cytoplasm. Its subcellular location is the nucleus. Its function is as follows. Binds long-chain acyl-coenzyme A molecules with a strong preference for unsaturated C18:1-CoA. Does not bind fatty acids. Plays a role in protein N-myristoylation. The sequence is that of Acyl-CoA-binding domain-containing protein 6 (acbd6) from Xenopus tropicalis (Western clawed frog).